A 220-amino-acid polypeptide reads, in one-letter code: MINVQAKPAAAASLAAIAIAFLAGCSSTKPVSQDTSPKPATSPAAPVTTAAMADPAADLIGRGCAQYAAQNPTGPGSVAGMAQDPVATAASNNPMLSTLTSALSGKLNPDVNLVDTLNGGEYTVFAPTNAAFDKLPAATIDQLKTDAKLLSSILTYHVIAGQASPSRIDGTHQTLQGADLTVIGARDDLMVNNAGLVCGGVHTANATVYMIDTVLMPPAQ.

A signal peptide spans 1 to 24 (MINVQAKPAAAASLAAIAIAFLAG). Residue Cys25 is the site of N-palmitoyl cysteine attachment. Cys25 is lipidated: S-diacylglycerol cysteine. O-linked (Man...) threonine glycans are attached at residues Thr48 and Thr49. Positions 83-215 (QDPVATAASN…ATVYMIDTVL (133 aa)) constitute an FAS1 domain.

As to quaternary structure, interacts with host (human) TLR2. O-glycosylated. Contains 0-3 mannose residues attached to residues 48-49 in various configurations; the dominant glycoform is Thr-48(Man)/Thr-49(Man2) with an unusual Man(1-&gt;3)Man linkage, but Thr48(Man3)/Thr49(Man0) through to Thr48(Man0/)Thr49(Man3) are also seen. Post-translationally, when isolated from culture filtrate runs as 25 and 23 kDa proteins; the larger protein is much less abundant, mostly associated with the cell and starts at residue 28, the shorter is more abundant and starts at residue 48.

It localises to the cell membrane. It is found in the secreted. The protein localises to the cell wall. Functionally, induces expression of human (host) matrix metalloproteinase-9 (MMP9) in a TLR1/TLR2-dependent fashion; the acylated 20 first mature residues (residues 25-40) induce the most expression, but whole recombinant protein (non-acylated and non-glycosylated), and mannosylated but not acylated protein (residues 26-220) also induce expression. The protein is Cell surface glycolipoprotein MPB83 (mpb83) of Mycobacterium bovis (strain ATCC BAA-935 / AF2122/97).